The chain runs to 187 residues: Orotate phosphoribosyltransferase (187 aa).

Residues Arg-99, Lys-100, Lys-103, His-105, and 125 to 133 (DDVITTGGS) contribute to the 5-phospho-alpha-D-ribose 1-diphosphate site. Residues Thr-129 and Arg-157 each coordinate orotate.

It belongs to the purine/pyrimidine phosphoribosyltransferase family. PyrE subfamily. As to quaternary structure, homodimer. Mg(2+) serves as cofactor.

It catalyses the reaction orotidine 5'-phosphate + diphosphate = orotate + 5-phospho-alpha-D-ribose 1-diphosphate. Its pathway is pyrimidine metabolism; UMP biosynthesis via de novo pathway; UMP from orotate: step 1/2. Its function is as follows. Catalyzes the transfer of a ribosyl phosphate group from 5-phosphoribose 1-diphosphate to orotate, leading to the formation of orotidine monophosphate (OMP). This is Orotate phosphoribosyltransferase from Leptospira borgpetersenii serovar Hardjo-bovis (strain JB197).